The chain runs to 468 residues: MAGARGLLCLWLGYFCLNLAQGQRPNLHLPGLRETEPSDRATGGSPSPDLRPHDKVSEHMLWLYDRYSGSSRVQATRTPGSQLPGPQPLRGGNTVRSFRAAAAGTPQTKGLHTFNLTSLTKSENILSATLYFYVGELVNISLSCPEPQGCSHHTQRQHIQIDLSAWILKSNQSQLLGHLSVDVVRPYRDSVSWLSKDITQLLRKAKQNEEFLIGFNITSRAHELPKRMLFFPEPYILVYANDAAISEPESVVSSLQRHRDFTAGTGPRLDSHVREALSVERRKKRSTGILLPLQNNELPGAEYQYKEEGAWEERKPYKSLQTQPPEKSRNKKKQRKGSHQKGQTLQFDEQTLKKARRKQWVEPRNCARRYLKVDFADIGWSEWIISPKSFDAFYCSGACQFPMPKSLKPSNHATIQSIVRAVGVVSGIPEPCCVPEKMSSLSILFFDENKNVVLKVYPNMTVDSCACR.

The first 22 residues, M1–G22, serve as a signal peptide directing secretion. The propeptide occupies Q23 to K358. The disordered stretch occupies residues L29–H53. Residues N115, N139, N171, and N216 are each glycosylated (N-linked (GlcNAc...) asparagine). The disordered stretch occupies residues R314 to E349. Basic residues predominate over residues R329–H339. Positions Q340 to E349 are enriched in polar residues. Disulfide bonds link C366–C433, C395–C465, and C399–C467. N459 carries an N-linked (GlcNAc...) asparagine glycan.

The protein belongs to the TGF-beta family. In terms of assembly, homodimer; disulfide-linked.

It is found in the secreted. Its function is as follows. Negatively regulates bone density. Antagonizes the ability of certain osteogenic BMPs to induce osteoprogenitor differentiation and ossification. This chain is Bone morphogenetic protein 3 (Bmp3), found in Mus musculus (Mouse).